A 156-amino-acid chain; its full sequence is 16 kDa phloem protein 1 (156 aa).

A C2 domain is found at 1–108 (MAVGILEVSL…LEMGVEKGTA (108 aa)). D20, D26, D78, D80, S83, and D86 together coordinate Ca(2+).

It depends on Ca(2+) as a cofactor.

Binds to both sense and antisense RNA. Can also bind sheared DNA and dodecamer DNA with a low affinity. Interacts with mesophyll plasmodesmata to mediate its own cell-to-cell transport and potentiate RNA trafficking. May play a role in plant defense signaling. In Arabidopsis thaliana (Mouse-ear cress), this protein is 16 kDa phloem protein 1.